Here is a 187-residue protein sequence, read N- to C-terminus: Phosphoheptose isomerase (187 aa).

The SIS domain occupies 34-187 (CIEALKNQKK…ILCSLIDESF (154 aa)). Position 49–51 (49–51 (NGG)) interacts with substrate. Zn(2+)-binding residues include histidine 58 and glutamate 62. Substrate-binding positions include glutamate 62, 91 to 92 (ND), 117 to 119 (STS), serine 122, and glutamine 169. Glutamine 169 and histidine 177 together coordinate Zn(2+).

This sequence belongs to the SIS family. GmhA subfamily. As to quaternary structure, homotetramer. Zn(2+) serves as cofactor.

The protein resides in the cytoplasm. It catalyses the reaction 2 D-sedoheptulose 7-phosphate = D-glycero-alpha-D-manno-heptose 7-phosphate + D-glycero-beta-D-manno-heptose 7-phosphate. It participates in carbohydrate biosynthesis; D-glycero-D-manno-heptose 7-phosphate biosynthesis; D-glycero-alpha-D-manno-heptose 7-phosphate and D-glycero-beta-D-manno-heptose 7-phosphate from sedoheptulose 7-phosphate: step 1/1. Catalyzes the isomerization of sedoheptulose 7-phosphate in D-glycero-D-manno-heptose 7-phosphate. This chain is Phosphoheptose isomerase, found in Nitratiruptor sp. (strain SB155-2).